Consider the following 502-residue polypeptide: Thermosome subunit beta (502 aa).

It belongs to the TCP-1 chaperonin family. Forms a Heterooligomeric complex of two stacked eight-membered rings.

Its function is as follows. Molecular chaperone; binds unfolded polypeptides in vitro, and has a weak ATPase activity. The protein is Thermosome subunit beta (thsB) of Desulfurococcus mucosus (Desulfurococcus mobilis).